A 391-amino-acid chain; its full sequence is Aspartate aminotransferase (391 aa).

2 residues coordinate L-aspartate: glycine 40 and asparagine 176. N6-(pyridoxal phosphate)lysine is present on lysine 236. Arginine 366 is an L-aspartate binding site.

It belongs to the class-I pyridoxal-phosphate-dependent aminotransferase family. In terms of assembly, homodimer. Pyridoxal 5'-phosphate is required as a cofactor.

It is found in the cytoplasm. It carries out the reaction L-aspartate + 2-oxoglutarate = oxaloacetate + L-glutamate. This Pyrococcus horikoshii (strain ATCC 700860 / DSM 12428 / JCM 9974 / NBRC 100139 / OT-3) protein is Aspartate aminotransferase (aspC).